The sequence spans 205 residues: Large ribosomal subunit protein bL25 (205 aa).

A disordered region spans residues 184 to 205 (QPAGAVSEAAEGGEAAGETPAA). Residues 186–205 (AGAVSEAAEGGEAAGETPAA) show a composition bias toward low complexity.

It belongs to the bacterial ribosomal protein bL25 family. CTC subfamily. Part of the 50S ribosomal subunit; part of the 5S rRNA/L5/L18/L25 subcomplex. Contacts the 5S rRNA. Binds to the 5S rRNA independently of L5 and L18.

Functionally, this is one of the proteins that binds to the 5S RNA in the ribosome where it forms part of the central protuberance. The protein is Large ribosomal subunit protein bL25 of Cupriavidus necator (strain ATCC 17699 / DSM 428 / KCTC 22496 / NCIMB 10442 / H16 / Stanier 337) (Ralstonia eutropha).